A 334-amino-acid chain; its full sequence is Ornithine carbamoyltransferase, catabolic (334 aa).

Carbamoyl phosphate-binding positions include 57 to 60, Gln-84, Arg-108, and 135 to 138; these read STRT and HPTQ. L-ornithine contacts are provided by residues Asn-169, Asp-233, and 237-238; that span reads SM. Residues 275–276 and Arg-320 each bind carbamoyl phosphate; that span reads CL.

The protein belongs to the aspartate/ornithine carbamoyltransferase superfamily. OTCase family.

The protein resides in the cytoplasm. It carries out the reaction carbamoyl phosphate + L-ornithine = L-citrulline + phosphate + H(+). Its pathway is amino-acid degradation; L-arginine degradation via ADI pathway; carbamoyl phosphate from L-arginine: step 2/2. Reversibly catalyzes the transfer of the carbamoyl group from carbamoyl phosphate (CP) to the N(epsilon) atom of ornithine (ORN) to produce L-citrulline. The sequence is that of Ornithine carbamoyltransferase, catabolic (arcB) from Salmonella typhimurium (strain LT2 / SGSC1412 / ATCC 700720).